The following is a 142-amino-acid chain: Putative pre-16S rRNA nuclease (142 aa).

It belongs to the YqgF nuclease family.

It localises to the cytoplasm. Functionally, could be a nuclease involved in processing of the 5'-end of pre-16S rRNA. This Mesoplasma florum (strain ATCC 33453 / NBRC 100688 / NCTC 11704 / L1) (Acholeplasma florum) protein is Putative pre-16S rRNA nuclease.